The following is a 217-amino-acid chain: Adenylate kinase (217 aa).

Position 10–15 (Gly10–Thr15) interacts with ATP. Residues Ala30 to Val59 form an NMP region. AMP contacts are provided by residues Thr31, Arg36, Leu57–Val59, Gly85–Arg88, and Gln92. The interval Gly126–Asp163 is LID. An ATP-binding site is contributed by Arg127. Cys130 and Cys133 together coordinate Zn(2+). An ATP-binding site is contributed by Val136–Tyr137. Cys150 and Asp153 together coordinate Zn(2+). The AMP site is built by Arg160 and Arg171. Residue Gln199 coordinates ATP.

Belongs to the adenylate kinase family. In terms of assembly, monomer.

It is found in the cytoplasm. The catalysed reaction is AMP + ATP = 2 ADP. It functions in the pathway purine metabolism; AMP biosynthesis via salvage pathway; AMP from ADP: step 1/1. Functionally, catalyzes the reversible transfer of the terminal phosphate group between ATP and AMP. Plays an important role in cellular energy homeostasis and in adenine nucleotide metabolism. This chain is Adenylate kinase, found in Onion yellows phytoplasma (strain OY-M).